We begin with the raw amino-acid sequence, 356 residues long: Alanine racemase, catabolic (356 aa).

K35 acts as the Proton acceptor; specific for D-alanine in catalysis. K35 carries the N6-(pyridoxal phosphate)lysine modification. Residue R130 participates in substrate binding. Y253 (proton acceptor; specific for L-alanine) is an active-site residue. M301 contributes to the substrate binding site.

This sequence belongs to the alanine racemase family. The cofactor is pyridoxal 5'-phosphate.

It carries out the reaction L-alanine = D-alanine. Isomerizes L-alanine to D-alanine which is then oxidized to pyruvate by DadA. The sequence is that of Alanine racemase, catabolic (dadX) from Salmonella typhi.